Here is a 553-residue protein sequence, read N- to C-terminus: Transcription factor IIIB 70 kDa subunit (553 aa).

The TFIIB-type zinc-finger motif lies at 6–39; it reads KQQKCKTCGHTQFDVNRYTAAGDVSCLRCGTVLE. C10, C13, C31, and C34 together coordinate Zn(2+). 2 consecutive repeat copies span residues 98-174 and 193-272. An interaction with TBP and with the Pol III subunit C34 region spans residues 98 to 272; the sequence is IAAALKIPDY…LQRRLNEFKK (175 aa). Residues 281-553 form an interaction with TBP region; the sequence is KSFREVENLE…KGLLGGNMGF (273 aa). Positions 473-523 are disordered; the sequence is KQEADELTGNTSKSSSGNRRKRNKSSLPAELRKELGDIDLDEDGTPRSAAD. A compositionally biased stretch (low complexity) spans 480–489; that stretch reads TGNTSKSSSG.

It belongs to the TFIIB family. As to quaternary structure, TFIIIB comprises the TATA-binding protein (TBP), the B-related factor (BRF) and a 70 kDa polypeptide.

It is found in the nucleus. General activator of RNA polymerase III transcription. Interacts with TBP. Binds to Pol III subunit C34 and to the TAU135 component of TFIIIC. The chain is Transcription factor IIIB 70 kDa subunit (TDS4) from Candida albicans (strain SC5314 / ATCC MYA-2876) (Yeast).